The primary structure comprises 113 residues: Cell cycle protein GpsB (113 aa).

A coiled-coil region spans residues L32–A71.

Belongs to the GpsB family. Forms polymers through the coiled coil domains. Interacts with PBP1, MreC and EzrA.

Its subcellular location is the cytoplasm. In terms of biological role, divisome component that associates with the complex late in its assembly, after the Z-ring is formed, and is dependent on DivIC and PBP2B for its recruitment to the divisome. Together with EzrA, is a key component of the system that regulates PBP1 localization during cell cycle progression. Its main role could be the removal of PBP1 from the cell pole after pole maturation is completed. Also contributes to the recruitment of PBP1 to the division complex. Not essential for septum formation. This chain is Cell cycle protein GpsB, found in Lactiplantibacillus plantarum (strain ATCC BAA-793 / NCIMB 8826 / WCFS1) (Lactobacillus plantarum).